The chain runs to 628 residues: tRNA uridine 5-carboxymethylaminomethyl modification enzyme MnmG (628 aa).

FAD is bound by residues 14–19 (GAGHAG), Val-126, and Ser-181. An NAD(+)-binding site is contributed by 273 to 287 (GPRYCPSIEDKVVRF). Position 370 (Gln-370) interacts with FAD.

The protein belongs to the MnmG family. As to quaternary structure, homodimer. Heterotetramer of two MnmE and two MnmG subunits. FAD is required as a cofactor.

It is found in the cytoplasm. Functionally, NAD-binding protein involved in the addition of a carboxymethylaminomethyl (cmnm) group at the wobble position (U34) of certain tRNAs, forming tRNA-cmnm(5)s(2)U34. This chain is tRNA uridine 5-carboxymethylaminomethyl modification enzyme MnmG, found in Bacillus subtilis (strain 168).